The primary structure comprises 377 residues: uncharacterized protein (377 aa).

Transmembrane regions (helical) follow at residues 21–41 (WLLA…LVLF), 66–86 (LVTF…FGLG), 163–183 (IGVL…GIVL), 197–217 (AILF…IAII), 236–256 (FYMG…YHIF), 292–312 (VNLI…FLIL), and 339–359 (IYFL…ELLF).

It is found in the cell membrane. This is an uncharacterized protein from Mycoplasma pneumoniae (strain ATCC 29342 / M129 / Subtype 1) (Mycoplasmoides pneumoniae).